Reading from the N-terminus, the 86-residue chain is DNA-directed RNA polymerase subunit Rpo6 (86 aa).

Belongs to the archaeal Rpo6/eukaryotic RPB6 RNA polymerase subunit family. As to quaternary structure, part of the RNA polymerase complex.

The protein localises to the cytoplasm. It catalyses the reaction RNA(n) + a ribonucleoside 5'-triphosphate = RNA(n+1) + diphosphate. Its function is as follows. DNA-dependent RNA polymerase (RNAP) catalyzes the transcription of DNA into RNA using the four ribonucleoside triphosphates as substrates. This chain is DNA-directed RNA polymerase subunit Rpo6, found in Sulfurisphaera tokodaii (strain DSM 16993 / JCM 10545 / NBRC 100140 / 7) (Sulfolobus tokodaii).